The sequence spans 384 residues: S-adenosylmethionine synthase (384 aa).

Residue His16 coordinates ATP. A Mg(2+)-binding site is contributed by Asp18. Glu44 provides a ligand contact to K(+). L-methionine is bound by residues Glu57 and Gln100. The interval Gln100 to Glu110 is flexible loop. ATP is bound by residues Asp165–Lys167, Asp240, Arg246–Lys247, Ala263, and Lys267. Asp240 contributes to the L-methionine binding site. L-methionine is bound at residue Lys271.

The protein belongs to the AdoMet synthase family. As to quaternary structure, homotetramer; dimer of dimers. Mg(2+) is required as a cofactor. The cofactor is K(+).

The protein localises to the cytoplasm. It carries out the reaction L-methionine + ATP + H2O = S-adenosyl-L-methionine + phosphate + diphosphate. It participates in amino-acid biosynthesis; S-adenosyl-L-methionine biosynthesis; S-adenosyl-L-methionine from L-methionine: step 1/1. Catalyzes the formation of S-adenosylmethionine (AdoMet) from methionine and ATP. The overall synthetic reaction is composed of two sequential steps, AdoMet formation and the subsequent tripolyphosphate hydrolysis which occurs prior to release of AdoMet from the enzyme. The sequence is that of S-adenosylmethionine synthase from Cellvibrio japonicus (strain Ueda107) (Pseudomonas fluorescens subsp. cellulosa).